The following is a 1289-amino-acid chain: Ethylene-insensitive protein 2.1 (1289 aa).

5 helical membrane-spanning segments follow: residues Leu-18 to Trp-38, Phe-48 to Tyr-68, Phe-96 to Ile-116, Leu-128 to Leu-148, and Ser-155 to Ile-175. Asn-185 is a glycosylation site (N-linked (GlcNAc...) asparagine). A helical membrane pass occupies residues Leu-199–Val-219. Asn-227 carries an N-linked (GlcNAc...) asparagine glycan. Helical transmembrane passes span Leu-235–Leu-255, Ala-260–Met-280, Val-288–Trp-308, Ile-335–Gln-355, Leu-356–Phe-376, Phe-393–Val-413, and Tyr-439–Thr-459. Residue Asn-521 is glycosylated (N-linked (GlcNAc...) asparagine). The segment at Leu-611 to Asn-659 is disordered. Positions Glu-616–Glu-626 are enriched in acidic residues. The segment covering Ser-635 to Gly-652 has biased composition (polar residues). Ser-646 and Ser-663 each carry phosphoserine. The N-linked (GlcNAc...) asparagine glycan is linked to Asn-745. Positions Ser-792–Gln-816 are disordered. Positions Pro-807–Gln-816 are enriched in polar residues. Residue Thr-819 is modified to Phosphothreonine. At Ser-923 the chain carries Phosphoserine. Asn-1025 carries N-linked (GlcNAc...) asparagine glycosylation. The tract at residues His-1208 to Arg-1227 is disordered. Residues Leu-1274 to Leu-1281 carry the Nuclear localization signal motif.

It belongs to the NRAMP (TC 2.A.55) family.

The protein localises to the endoplasmic reticulum membrane. The protein resides in the nucleus. It is found in the cytoplasm. In terms of biological role, central factor in signaling pathways regulated by ethylene (ET) and involved in various processes including development, plant defense, senescence, nucleotide sugar flux, and tropisms. Functionally, trafficking signal inducing ethylene response. The nuclear localization is both necessary and sufficient to activate EIN3-mediated transcription and ethylene responses. The sequence is that of Ethylene-insensitive protein 2.1 from Populus trichocarpa (Western balsam poplar).